Here is a 468-residue protein sequence, read N- to C-terminus: MAAGWAPPRLEDFILTEKLGSGSYATVYKAYRKRNAREVVAIKCVSKKSLNKAAVENLLTEIEILKTVHHPHILELKDFQWDQDYIFLITEYCAGGDLSRFIRTRRILPERIVQVFLQQLASALKFLHEKNISHLDLKPQNILLSRLDRPHLKLADFGFAQHMSSEDAPQALRGSPLYMAPEMVCSKHYDARVDLWSVGVILYEALFGKAPFASKSFSELEEKILSHKTIELPTRPRLSPECRDLLQQLLQRDPDKRISFIEFFAHLFVDLEHMPSAETLEKATRLVVEAVEKDSAGEHSAALTLYCKALEYFIPALHYESDAKRKEAMRSKVCQYISRAEELKVLVSSSNKTLLMQGISGRELLKEMAQDKPRLFSALEVASAAVAKDEEGCACDALDLYQQSLGELLLMLSAESPGRRRELLHAEIQTLMGRAEFLKEQMKTSQWKSESLGQEVLSESVRNSCSLQ.

In terms of domain architecture, Protein kinase spans 13-269 (FILTEKLGSG…FIEFFAHLFV (257 aa)). Residues 19 to 27 (LGSGSYATV) and Lys-43 contribute to the ATP site. Asp-136 functions as the Proton acceptor in the catalytic mechanism. MIT domains are found at residues 279 to 347 (TLEK…KVLV) and 374 to 442 (RLFS…KEQM).

This sequence belongs to the protein kinase superfamily. Ser/Thr protein kinase family. APG1/unc-51/ULK1 subfamily.

Its subcellular location is the cytoplasm. It catalyses the reaction L-seryl-[protein] + ATP = O-phospho-L-seryl-[protein] + ADP + H(+). The catalysed reaction is L-threonyl-[protein] + ATP = O-phospho-L-threonyl-[protein] + ADP + H(+). Serine/threonine protein kinase that acts as a regulator of Sonic hedgehog (SHH) signaling and autophagy. This Xenopus laevis (African clawed frog) protein is Serine/threonine-protein kinase ULK3 (ulk3).